We begin with the raw amino-acid sequence, 365 residues long: tRNA/tmRNA (uracil-C(5))-methyltransferase (365 aa).

Gln189, Tyr217, Asn222, Glu238, and Asp298 together coordinate S-adenosyl-L-methionine. Cys323 acts as the Nucleophile in catalysis. Glu357 functions as the Proton acceptor in the catalytic mechanism.

The protein belongs to the class I-like SAM-binding methyltransferase superfamily. RNA M5U methyltransferase family. TrmA subfamily.

It carries out the reaction uridine(54) in tRNA + S-adenosyl-L-methionine = 5-methyluridine(54) in tRNA + S-adenosyl-L-homocysteine + H(+). The catalysed reaction is uridine(341) in tmRNA + S-adenosyl-L-methionine = 5-methyluridine(341) in tmRNA + S-adenosyl-L-homocysteine + H(+). Dual-specificity methyltransferase that catalyzes the formation of 5-methyluridine at position 54 (m5U54) in all tRNAs, and that of position 341 (m5U341) in tmRNA (transfer-mRNA). This Proteus mirabilis (strain HI4320) protein is tRNA/tmRNA (uracil-C(5))-methyltransferase.